The primary structure comprises 223 residues: Ribose-5-phosphate isomerase A (223 aa).

Residues 32–35 (TGST), 85–88 (DGAD), and 98–101 (KGGG) each bind substrate. Glu107 acts as the Proton acceptor in catalysis. Lys125 serves as a coordination point for substrate.

The protein belongs to the ribose 5-phosphate isomerase family. In terms of assembly, homodimer.

The enzyme catalyses aldehydo-D-ribose 5-phosphate = D-ribulose 5-phosphate. The protein operates within carbohydrate degradation; pentose phosphate pathway; D-ribose 5-phosphate from D-ribulose 5-phosphate (non-oxidative stage): step 1/1. In terms of biological role, catalyzes the reversible conversion of ribose-5-phosphate to ribulose 5-phosphate. The polypeptide is Ribose-5-phosphate isomerase A (Pseudomonas syringae pv. syringae (strain B728a)).